Here is a 188-residue protein sequence, read N- to C-terminus: Ribosome-recycling factor (188 aa).

The protein belongs to the RRF family.

It localises to the cytoplasm. Functionally, responsible for the release of ribosomes from messenger RNA at the termination of protein biosynthesis. May increase the efficiency of translation by recycling ribosomes from one round of translation to another. The protein is Ribosome-recycling factor of Cereibacter sphaeroides (strain ATCC 17025 / ATH 2.4.3) (Rhodobacter sphaeroides).